Consider the following 674-residue polypeptide: RNA polymerase sigma factor RpoD (674 aa).

The interval 214 to 252 (AEGAAPAARRPASDEPEYDADGNPISRIDEEEDDDDSSN) is disordered. Positions 440-510 (MVEANLRLVI…TRSIADQART (71 aa)) are sigma-70 factor domain-2. The short motif at 464–467 (DLIQ) is the Interaction with polymerase core subunit RpoC element. The segment at 519–595 (ETINKLVRTG…DKNAILPLDS (77 aa)) is sigma-70 factor domain-3. The tract at residues 608-661 (VLASLTPREERVLRMRFGIGMNTDHTLEEVGQQFSVTRERIRQIEAKALRKLKH) is sigma-70 factor domain-4. The segment at residues 634–653 (LEEVGQQFSVTRERIRQIEA) is a DNA-binding region (H-T-H motif).

The protein belongs to the sigma-70 factor family. RpoD/SigA subfamily. In terms of assembly, interacts transiently with the RNA polymerase catalytic core.

It is found in the cytoplasm. Its function is as follows. Sigma factors are initiation factors that promote the attachment of RNA polymerase to specific initiation sites and are then released. This sigma factor is the primary sigma factor during exponential growth. In Rhodobacter capsulatus (strain ATCC BAA-309 / NBRC 16581 / SB1003), this protein is RNA polymerase sigma factor RpoD.